A 199-amino-acid chain; its full sequence is V-type proton ATPase subunit E (199 aa).

It belongs to the V-ATPase E subunit family.

In terms of biological role, produces ATP from ADP in the presence of a proton gradient across the membrane. This chain is V-type proton ATPase subunit E, found in Clostridium botulinum (strain 657 / Type Ba4).